A 60-amino-acid chain; its full sequence is UPF0434 protein HCH_02705 (60 aa).

This sequence belongs to the UPF0434 family.

The sequence is that of UPF0434 protein HCH_02705 from Hahella chejuensis (strain KCTC 2396).